The following is a 96-amino-acid chain: Co-chaperonin GroES (96 aa).

Belongs to the GroES chaperonin family. In terms of assembly, heptamer of 7 subunits arranged in a ring. Interacts with the chaperonin GroEL.

It is found in the cytoplasm. In terms of biological role, together with the chaperonin GroEL, plays an essential role in assisting protein folding. The GroEL-GroES system forms a nano-cage that allows encapsulation of the non-native substrate proteins and provides a physical environment optimized to promote and accelerate protein folding. GroES binds to the apical surface of the GroEL ring, thereby capping the opening of the GroEL channel. This Coxiella burnetii (strain Dugway 5J108-111) protein is Co-chaperonin GroES.